Consider the following 64-residue polypeptide: Small, acid-soluble spore protein D (64 aa).

It belongs to the alpha/beta-type SASP family.

Its function is as follows. SASP are bound to spore DNA. They are double-stranded DNA-binding proteins that cause DNA to change to an a-like conformation. They protect the DNA backbone from chemical and enzymatic cleavage and are thus involved in dormant spore's high resistance to UV light. This Bacillus subtilis (strain 168) protein is Small, acid-soluble spore protein D (sspD).